A 101-amino-acid polypeptide reads, in one-letter code: Large ribosomal subunit protein eL30 (101 aa).

It belongs to the eukaryotic ribosomal protein eL30 family.

The sequence is that of Large ribosomal subunit protein eL30 from Pyrobaculum islandicum (strain DSM 4184 / JCM 9189 / GEO3).